The sequence spans 285 residues: Bifunctional protein FolD (285 aa).

NADP(+)-binding positions include 165-167 (GRS) and Ser-190.

This sequence belongs to the tetrahydrofolate dehydrogenase/cyclohydrolase family. In terms of assembly, homodimer.

The catalysed reaction is (6R)-5,10-methylene-5,6,7,8-tetrahydrofolate + NADP(+) = (6R)-5,10-methenyltetrahydrofolate + NADPH. It catalyses the reaction (6R)-5,10-methenyltetrahydrofolate + H2O = (6R)-10-formyltetrahydrofolate + H(+). Its pathway is one-carbon metabolism; tetrahydrofolate interconversion. Catalyzes the oxidation of 5,10-methylenetetrahydrofolate to 5,10-methenyltetrahydrofolate and then the hydrolysis of 5,10-methenyltetrahydrofolate to 10-formyltetrahydrofolate. The chain is Bifunctional protein FolD from Burkholderia pseudomallei (strain 1710b).